We begin with the raw amino-acid sequence, 60 residues long: Large ribosomal subunit protein uL30 (60 aa).

It belongs to the universal ribosomal protein uL30 family. Part of the 50S ribosomal subunit.

This is Large ribosomal subunit protein uL30 from Flavobacterium psychrophilum (strain ATCC 49511 / DSM 21280 / CIP 103535 / JIP02/86).